The sequence spans 538 residues: ATP synthase subunit beta 2 (538 aa).

A compositionally biased stretch (polar residues) spans 1–10; it reads MADPQATNGT. The interval 1–30 is disordered; it reads MADPQATNGTGAACAERDASDVGDVSDVGD. 185–192 provides a ligand contact to ATP; the sequence is GGAGVGKT. Basic and acidic residues predominate over residues 494–505; sequence AAAREADARREA. Positions 494–538 are disordered; it reads AAAREADARREAAAAASVAGPGTTSGTTSDPASGSAEPQGARHGR. Residues 506–529 are compositionally biased toward low complexity; sequence AAAASVAGPGTTSGTTSDPASGSA.

Belongs to the ATPase alpha/beta chains family. In terms of assembly, F-type ATPases have 2 components, CF(1) - the catalytic core - and CF(0) - the membrane proton channel. CF(1) has five subunits: alpha(3), beta(3), gamma(1), delta(1), epsilon(1). CF(0) has three main subunits: a(1), b(2) and c(9-12). The alpha and beta chains form an alternating ring which encloses part of the gamma chain. CF(1) is attached to CF(0) by a central stalk formed by the gamma and epsilon chains, while a peripheral stalk is formed by the delta and b chains.

It is found in the cell inner membrane. The catalysed reaction is ATP + H2O + 4 H(+)(in) = ADP + phosphate + 5 H(+)(out). Its function is as follows. Produces ATP from ADP in the presence of a proton gradient across the membrane. The catalytic sites are hosted primarily by the beta subunits. The protein is ATP synthase subunit beta 2 of Burkholderia pseudomallei (strain K96243).